Consider the following 759-residue polypeptide: TSK-associating protein 1 (759 aa).

Positions Met-1–Cys-29 are cleaved as a signal peptide. Positions Gly-55–Thr-74 are disordered. Over residues Ala-63–Thr-74 the composition is skewed to polar residues. EFE repeat repeat units lie at residues Val-91–Leu-138, Ser-139–His-176, Ser-177–His-215, Ser-216–Gln-254, Ser-255–His-293, Ala-294–His-329, Phe-330–Gln-368, Ser-369–Gln-407, Ser-408–Glu-443, and Ser-444–Glu-473. The interval Val-91 to Glu-473 is 10 X approximate EFE repeat. 2 coiled-coil regions span residues Arg-142 to Ala-461 and Ile-685 to Glu-734. Disordered regions lie at residues Glu-154–Leu-184, Gln-200–Arg-219, Ala-271–Ala-332, and Leu-393–Met-414.

As to quaternary structure, homomultimer. Interacts (via C-terminal domain) with GIP1, CSN1 (via N-terminal domain) and TSK (via TPR repeats). Binds calcium through the EFE repeats. As to expression, expressed preferentially in flowers and shoot apex.

Its subcellular location is the endoplasmic reticulum lumen. The protein resides in the nucleus envelope. The protein localises to the cytoplasm. Involved in seedling development in the dark. May be involved, when interacting with TSK, in the organization of spindle microtubules and may participate, when interacting with GIP1, in structural links between the nuclear envelope and the cytoskeleton. The polypeptide is TSK-associating protein 1 (TSA1) (Arabidopsis thaliana (Mouse-ear cress)).